Here is a 567-residue protein sequence, read N- to C-terminus: uncharacterized protein (567 aa).

The tract at residues 1-26 (MPSEKATTRHLPGAVETLSPRTGRRP) is disordered. 6 consecutive transmembrane segments (helical) span residues 57–77 (AILV…TVAF), 90–110 (VSFG…TYWL), 142–162 (VALA…IIYG), 173–193 (LFSM…LTEF), 221–241 (MLVW…TAIF), and 257–277 (VLIL…ILAW). An HAMP domain is found at 278–329 (LTATPVRVVREALNRVEQGDLSGDLVVFDGTELGELQRGFNRMVEGLRERER). In terms of domain architecture, Guanylate cyclase spans 361–485 (AVVFVDIVGS…EPVNEAARLC (125 aa)).

This sequence belongs to the adenylyl cyclase class-3 family.

It localises to the cell membrane. This is an uncharacterized protein from Mycobacterium tuberculosis (strain ATCC 25618 / H37Rv).